The primary structure comprises 291 residues: 33 kDa chaperonin (291 aa).

2 disulfides stabilise this stretch: Cys237–Cys239 and Cys270–Cys273.

Belongs to the HSP33 family. In terms of processing, under oxidizing conditions two disulfide bonds are formed involving the reactive cysteines. Under reducing conditions zinc is bound to the reactive cysteines and the protein is inactive.

Its subcellular location is the cytoplasm. Its function is as follows. Redox regulated molecular chaperone. Protects both thermally unfolding and oxidatively damaged proteins from irreversible aggregation. Plays an important role in the bacterial defense system toward oxidative stress. This Bacillus cytotoxicus (strain DSM 22905 / CIP 110041 / 391-98 / NVH 391-98) protein is 33 kDa chaperonin.